A 61-amino-acid polypeptide reads, in one-letter code: Lens epithelial cell protein LEP503 (61 aa).

Restricted to lens epithelial cells.

May play a role in lens epithelial cell differentiation. This is Lens epithelial cell protein LEP503 (LENEP) from Homo sapiens (Human).